The primary structure comprises 619 residues: UvrABC system protein C (619 aa).

Positions 20-98 constitute a GIY-YIG domain; the sequence is TAPGVYRMYA…IKSLSPRYNV (79 aa). One can recognise a UVR domain in the interval 207–242; the sequence is DQLGEEIMHSMQQASEALEFERAARLRDLLSSLRSM.

Belongs to the UvrC family. As to quaternary structure, interacts with UvrB in an incision complex.

It localises to the cytoplasm. The UvrABC repair system catalyzes the recognition and processing of DNA lesions. UvrC both incises the 5' and 3' sides of the lesion. The N-terminal half is responsible for the 3' incision and the C-terminal half is responsible for the 5' incision. In Xanthomonas axonopodis pv. citri (strain 306), this protein is UvrABC system protein C.